The chain runs to 308 residues: Isoaspartyl peptidase/L-asparaginase (308 aa).

Residue methionine 1 is modified to N-acetylmethionine. Threonine 168 serves as the catalytic Nucleophile. Substrate is bound by residues 196-199 (RVGD) and 219-222 (TGHG).

Belongs to the Ntn-hydrolase family. As to quaternary structure, heterodimer of an alpha and beta chain produced by autocleavage. This heterodimer may then dimerize in turn, giving rise to a heterotetramer. In terms of processing, cleaved into an alpha and beta chain by autocatalysis; this activates the enzyme. The N-terminal residue of the beta subunit is responsible for the nucleophile hydrolase activity.

It localises to the cytoplasm. It carries out the reaction L-asparagine + H2O = L-aspartate + NH4(+). It catalyses the reaction Cleavage of a beta-linked Asp residue from the N-terminus of a polypeptide.. Has both L-asparaginase and beta-aspartyl peptidase activity. May be involved in the production of L-aspartate, which can act as an excitatory neurotransmitter in some brain regions. Is highly active with L-Asp beta-methyl ester. Besides, has catalytic activity toward beta-aspartyl dipeptides and their methyl esters, including beta-L-Asp-L-Phe, beta-L-Asp-L-Phe methyl ester (aspartame), beta-L-Asp-L-Ala, beta-L-Asp-L-Leu and beta-L-Asp-L-Lys. Does not have aspartylglucosaminidase activity and is inactive toward GlcNAc-L-Asn. Likewise, has no activity toward glutamine. In Macaca fascicularis (Crab-eating macaque), this protein is Isoaspartyl peptidase/L-asparaginase (ASRGL1).